Consider the following 308-residue polypeptide: Lipoyl synthase 2 (308 aa).

7 residues coordinate [4Fe-4S] cluster: Cys49, Cys54, Cys60, Cys75, Cys79, Cys82, and Ser300. The 229-residue stretch at Tyr61–Lys289 folds into the Radical SAM core domain.

It belongs to the radical SAM superfamily. Lipoyl synthase family. Requires [4Fe-4S] cluster as cofactor.

The protein resides in the cytoplasm. It catalyses the reaction [[Fe-S] cluster scaffold protein carrying a second [4Fe-4S](2+) cluster] + N(6)-octanoyl-L-lysyl-[protein] + 2 oxidized [2Fe-2S]-[ferredoxin] + 2 S-adenosyl-L-methionine + 4 H(+) = [[Fe-S] cluster scaffold protein] + N(6)-[(R)-dihydrolipoyl]-L-lysyl-[protein] + 4 Fe(3+) + 2 hydrogen sulfide + 2 5'-deoxyadenosine + 2 L-methionine + 2 reduced [2Fe-2S]-[ferredoxin]. It functions in the pathway protein modification; protein lipoylation via endogenous pathway; protein N(6)-(lipoyl)lysine from octanoyl-[acyl-carrier-protein]: step 2/2. Catalyzes the radical-mediated insertion of two sulfur atoms into the C-6 and C-8 positions of the octanoyl moiety bound to the lipoyl domains of lipoate-dependent enzymes, thereby converting the octanoylated domains into lipoylated derivatives. The chain is Lipoyl synthase 2 from Prochlorococcus marinus (strain SARG / CCMP1375 / SS120).